Consider the following 100-residue polypeptide: MYYSFMTMKQSDDQIRAQIFKALSDESRLAIIRTLYVSGKELSCGEVGEKCNIVKTTASYHFKTLREAGLTATRKDSRTKYVSLREDTFQTYLPGFLETL.

The 93-residue stretch at 8–100 (MKQSDDQIRA…TYLPGFLETL (93 aa)) folds into the HTH arsR-type domain. The segment at residues 44-67 (CGEVGEKCNIVKTTASYHFKTLRE) is a DNA-binding region (H-T-H motif).

This is an uncharacterized protein from Bacillus subtilis (strain 168).